Here is a 466-residue protein sequence, read N- to C-terminus: Ribulose bisphosphate carboxylase large chain (466 aa).

Lys4 is modified (N6,N6,N6-trimethyllysine). Residues Asn113 and Thr163 each coordinate substrate. Lys165 acts as the Proton acceptor in catalysis. Lys167 contributes to the substrate binding site. Positions 191, 193, and 194 each coordinate Mg(2+). Lys191 is subject to N6-carboxylysine. Residue His284 is the Proton acceptor of the active site. Residues Arg285, His317, and Ser369 each contribute to the substrate site.

It belongs to the RuBisCO large chain family. Type I subfamily. As to quaternary structure, heterohexadecamer of 8 large chains and 8 small chains; disulfide-linked. The disulfide link is formed within the large subunit homodimers. It depends on Mg(2+) as a cofactor. The disulfide bond which can form in the large chain dimeric partners within the hexadecamer appears to be associated with oxidative stress and protein turnover.

It localises to the plastid. The protein localises to the chloroplast. It catalyses the reaction 2 (2R)-3-phosphoglycerate + 2 H(+) = D-ribulose 1,5-bisphosphate + CO2 + H2O. It carries out the reaction D-ribulose 1,5-bisphosphate + O2 = 2-phosphoglycolate + (2R)-3-phosphoglycerate + 2 H(+). In terms of biological role, ruBisCO catalyzes two reactions: the carboxylation of D-ribulose 1,5-bisphosphate, the primary event in carbon dioxide fixation, as well as the oxidative fragmentation of the pentose substrate in the photorespiration process. Both reactions occur simultaneously and in competition at the same active site. This is Ribulose bisphosphate carboxylase large chain from Ruttya fruticosa (African azalea).